The sequence spans 571 residues: Mannan endo-1,4-beta-mannosidase B (571 aa).

The first 19 residues, methionine 1–alanine 19, serve as a signal peptide directing secretion. The CBM6 domain maps to valine 22 to asparagine 141. In terms of domain architecture, GH26 spans proline 165 to aspartate 459. Tryptophan 286 serves as a coordination point for substrate. Glutamate 319 serves as the catalytic Proton donor. Positions 324 and 379 each coordinate substrate. Glutamate 407 serves as the catalytic Nucleophile. CBM10 domains lie at glutamate 491 to glycine 527 and valine 534 to isoleucine 571.

This sequence belongs to the glycosyl hydrolase 26 family.

The catalysed reaction is Random hydrolysis of (1-&gt;4)-beta-D-mannosidic linkages in mannans, galactomannans and glucomannans.. The protein is Mannan endo-1,4-beta-mannosidase B (MANB) of Piromyces sp.